Here is a 303-residue protein sequence, read N- to C-terminus: Sulfate adenylyltransferase subunit 2 (303 aa).

The protein belongs to the PAPS reductase family. CysD subfamily. As to quaternary structure, heterodimer composed of CysD, the smaller subunit, and CysN.

The enzyme catalyses sulfate + ATP + H(+) = adenosine 5'-phosphosulfate + diphosphate. The protein operates within sulfur metabolism; hydrogen sulfide biosynthesis; sulfite from sulfate: step 1/3. Its function is as follows. With CysN forms the ATP sulfurylase (ATPS) that catalyzes the adenylation of sulfate producing adenosine 5'-phosphosulfate (APS) and diphosphate, the first enzymatic step in sulfur assimilation pathway. APS synthesis involves the formation of a high-energy phosphoric-sulfuric acid anhydride bond driven by GTP hydrolysis by CysN coupled to ATP hydrolysis by CysD. This Akkermansia muciniphila (strain ATCC BAA-835 / DSM 22959 / JCM 33894 / BCRC 81048 / CCUG 64013 / CIP 107961 / Muc) protein is Sulfate adenylyltransferase subunit 2.